Here is a 343-residue protein sequence, read N- to C-terminus: Follistatin (343 aa).

Residues 1–28 (MLNQRIHPGMLVLLMFLYHFMEDHTAQA) form the signal peptide. The 74-residue stretch at 29-102 (GNCWLRQARN…TCENVDCGPG (74 aa)) folds into the TB domain. 8 disulfides stabilise this stretch: C31/C54, C41/C87, C55/C90, C94/C105, C99/C115, C117/C149, C121/C142, and C131/C163. A Follistatin-like 1 domain is found at 93–116 (TCENVDCGPGKKCKMNKKNKPRCV). 3 Kazal-like domains span residues 99–165 (CGPG…KCKK), 185–240 (NAYC…KCIK), and 263–317 (RGRC…SCNS). N-linked (GlcNAc...) asparagine glycosylation occurs at N123. The Follistatin-like 2 domain occupies 166 to 189 (TCRDVLCPGSSTCVVDQTNNAYCV). Intrachain disulfides connect C191/C224, C195/C217, and C206/C238. A Follistatin-like 3 domain is found at 243–267 (SCEDIQCSAGKKCLWDFKVGRGRCA). Intrachain disulfides connect C269–C301, C273–C294, and C283–C315. An N-linked (GlcNAc...) asparagine glycan is attached at N287. The disordered stretch occupies residues 315–343 (CNSINEDPEEEEEDEDQDYSFPISSILEW). Over residues 320–332 (EDPEEEEEDEDQD) the composition is skewed to acidic residues.

As to quaternary structure, monomer. As to expression, ciliary ganglion neurons. Levels are higher in the iris than the choroid.

The protein localises to the secreted. In terms of biological role, binds directly to activin and functions as an activin antagonist. Inhibits activin A signaling in the iris and regulates somatostatin phenotype in ciliary ganglion neurons. Specific inhibitor of the biosynthesis and secretion of pituitary follicle stimulating hormone (FSH). The polypeptide is Follistatin (FST) (Gallus gallus (Chicken)).